Here is a 516-residue protein sequence, read N- to C-terminus: Glutamyl-tRNA(Gln) amidotransferase subunit B, mitochondrial (516 aa).

It belongs to the GatB/GatE family. GatB subfamily. Subunit of the heterotrimeric GatCAB amidotransferase (AdT) complex, composed of A, B and C subunits.

It localises to the mitochondrion. It carries out the reaction L-glutamyl-tRNA(Gln) + L-glutamine + ATP + H2O = L-glutaminyl-tRNA(Gln) + L-glutamate + ADP + phosphate + H(+). Its function is as follows. Allows the formation of correctly charged Gln-tRNA(Gln) through the transamidation of misacylated Glu-tRNA(Gln) in the mitochondria. The reaction takes place in the presence of glutamine and ATP through an activated gamma-phospho-Glu-tRNA(Gln). In Drosophila melanogaster (Fruit fly), this protein is Glutamyl-tRNA(Gln) amidotransferase subunit B, mitochondrial.